Consider the following 285-residue polypeptide: RNA polymerase sigma factor RpoH (285 aa).

Residues 53–122 (LILSHLRFVI…IHEYVLRNWR (70 aa)) form a sigma-70 factor domain-2 region. The short motif at 77–80 (DLIQ) is the Interaction with polymerase core subunit RpoC element. A sigma-70 factor domain-4 region spans residues 229-281 (ALLRLDERSRNIIRARWLDKKEKNTLQKIANNYGISAERVRQLEKNAMKKLKI). Residues 254 to 273 (LQKIANNYGISAERVRQLEK) constitute a DNA-binding region (H-T-H motif).

Belongs to the sigma-70 factor family. RpoH subfamily. In terms of assembly, interacts with the RNA polymerase core enzyme.

Its subcellular location is the cytoplasm. Functionally, sigma factors are initiation factors that promote the attachment of RNA polymerase to specific initiation sites and are then released. This sigma factor is involved in regulation of expression of heat shock genes. This Buchnera aphidicola subsp. Schizaphis graminum (strain Sg) protein is RNA polymerase sigma factor RpoH.